We begin with the raw amino-acid sequence, 378 residues long: 3-dehydroquinate synthase (378 aa).

Residues 115 to 119 (GVVGD), 139 to 140 (TS), lysine 152, and lysine 161 each bind NAD(+). Residues glutamate 194, histidine 256, and histidine 275 each contribute to the Zn(2+) site.

It belongs to the sugar phosphate cyclases superfamily. Dehydroquinate synthase family. Co(2+) is required as a cofactor. Requires Zn(2+) as cofactor. NAD(+) serves as cofactor.

The protein localises to the cytoplasm. The catalysed reaction is 7-phospho-2-dehydro-3-deoxy-D-arabino-heptonate = 3-dehydroquinate + phosphate. It participates in metabolic intermediate biosynthesis; chorismate biosynthesis; chorismate from D-erythrose 4-phosphate and phosphoenolpyruvate: step 2/7. In terms of biological role, catalyzes the conversion of 3-deoxy-D-arabino-heptulosonate 7-phosphate (DAHP) to dehydroquinate (DHQ). The protein is 3-dehydroquinate synthase of Brucella canis (strain ATCC 23365 / NCTC 10854 / RM-666).